The primary structure comprises 142 residues: Large ribosomal subunit protein uL11 (142 aa).

This sequence belongs to the universal ribosomal protein uL11 family. Part of the ribosomal stalk of the 50S ribosomal subunit. Interacts with L10 and the large rRNA to form the base of the stalk. L10 forms an elongated spine to which L12 dimers bind in a sequential fashion forming a multimeric L10(L12)X complex. In terms of processing, one or more lysine residues are methylated.

Forms part of the ribosomal stalk which helps the ribosome interact with GTP-bound translation factors. In Proteus mirabilis (strain HI4320), this protein is Large ribosomal subunit protein uL11.